The chain runs to 148 residues: Probable glucosamine 6-phosphate N-acetyltransferase (148 aa).

Residues isoleucine 3 to lysine 148 enclose the N-acetyltransferase domain. Substrate contacts are provided by residues threonine 25, lysine 72–histidine 75, and glutamate 84–valine 86. Acetyl-CoA-binding positions include valine 86–valine 88 and leucine 94–lysine 99. Substrate contacts are provided by residues tyrosine 115–lysine 116 and aspartate 120. Tyrosine 129–lysine 131 provides a ligand contact to acetyl-CoA. Position 138 (glutamate 138) interacts with substrate.

The protein belongs to the acetyltransferase family. GNA1 subfamily.

It catalyses the reaction D-glucosamine 6-phosphate + acetyl-CoA = N-acetyl-D-glucosamine 6-phosphate + CoA + H(+). Its pathway is nucleotide-sugar biosynthesis; UDP-N-acetyl-alpha-D-glucosamine biosynthesis; N-acetyl-alpha-D-glucosamine 1-phosphate from alpha-D-glucosamine 6-phosphate (route I): step 1/2. In Acanthamoeba polyphaga (Amoeba), this protein is Probable glucosamine 6-phosphate N-acetyltransferase.